The sequence spans 234 residues: Large ribosomal subunit protein uL1 (234 aa).

This sequence belongs to the universal ribosomal protein uL1 family. In terms of assembly, part of the 50S ribosomal subunit.

Functionally, binds directly to 23S rRNA. The L1 stalk is quite mobile in the ribosome, and is involved in E site tRNA release. In terms of biological role, protein L1 is also a translational repressor protein, it controls the translation of the L11 operon by binding to its mRNA. The chain is Large ribosomal subunit protein uL1 from Vibrio atlanticus (strain LGP32) (Vibrio splendidus (strain Mel32)).